We begin with the raw amino-acid sequence, 98 residues long: MFDLRTKVMIGIASTLLIAAIVLITVVFCLYLKISKALKCAREVESCMDPTKAVSEKMIRGKPIIADPCRPLQCCDNCSLFKDVGAMPPCFCGTNEGL.

The first 29 residues, 1-29 (MFDLRTKVMIGIASTLLIAAIVLITVVFC), serve as a signal peptide directing secretion.

The protein belongs to the FAM24 family.

It is found in the secreted. This chain is Protein FAM24A (Fam24a), found in Rattus norvegicus (Rat).